The primary structure comprises 510 residues: GMP synthase [glutamine-hydrolyzing] (510 aa).

The Glutamine amidotransferase type-1 domain occupies 5-195; sequence LVLVVDFGGQ…LFNVCNLKGD (191 aa). The Nucleophile role is filled by Cys-82. Residues His-169 and Glu-171 contribute to the active site. Residues 196–385 enclose the GMPS ATP-PPase domain; it reads WSMSSFAEQQ…LGIPHKLVWR (190 aa). 223 to 229 contacts ATP; the sequence is SGGVDSS.

In terms of assembly, homodimer.

The enzyme catalyses XMP + L-glutamine + ATP + H2O = GMP + L-glutamate + AMP + diphosphate + 2 H(+). Its pathway is purine metabolism; GMP biosynthesis; GMP from XMP (L-Gln route): step 1/1. In terms of biological role, catalyzes the synthesis of GMP from XMP. The chain is GMP synthase [glutamine-hydrolyzing] from Clostridium botulinum (strain Kyoto / Type A2).